The chain runs to 103 residues: uncharacterized protein (103 aa).

A helical transmembrane segment spans residues 35–57; sequence PFVSMFQTFLEVLTATVLAFTAY.

It is found in the host membrane. This is an uncharacterized protein from Acidianus bottle-shaped virus (isolate Italy/Pozzuoli) (ABV).